Reading from the N-terminus, the 120-residue chain is uncharacterized protein (120 aa).

This is an uncharacterized protein from Archaeoglobus fulgidus (strain ATCC 49558 / DSM 4304 / JCM 9628 / NBRC 100126 / VC-16).